The sequence spans 295 residues: Aquaporin-9 (295 aa).

Residues 1-24 (MPSEKDRAKKNLVQRLALKSCLAK) lie on the Cytoplasmic side of the membrane. A helical transmembrane segment spans residues 25-43 (ETLSEFLGTFIMIVLGCGS). Residues 44–57 (IAQAVLSREKAGGI) are Extracellular-facing. The chain crosses the membrane as a helical span at residues 58–77 (ITINIGFATAVVMALYATFG). The Cytoplasmic segment spans residues 78–79 (VS). An intramembrane region (discontinuously helical) is located at residues 80–92 (GGHINPAVSFAMC). Residues 84-86 (NPA) carry the NPA 1 motif. Residues 93–98 (TFGRME) lie on the Cytoplasmic side of the membrane. A helical transmembrane segment spans residues 99–123 (WFKFPFYVGAQLLGAFVGAATVFGI). Residues 124–160 (YYDGLMAFADGKLLITGENGTAFIFATYPKPFVSVPG) are Extracellular-facing. A helical transmembrane segment spans residues 161 to 178 (AFVDQVVSTMFLLLIVFA). Residues 179-190 (IFDSRNLGVPRG) are Cytoplasmic-facing. Residues 191–207 (LEPIVIGLLIIVISCSL) traverse the membrane as a helical segment. The Extracellular segment spans residues 208 to 210 (GLN). An intramembrane region (discontinuously helical) is located at residues 211–225 (SGCAMNPARDLSPRL). The NPA 2 signature appears at 216–218 (NPA). The Extracellular portion of the chain corresponds to 226–243 (FTALAGWGFEVFTFGNNF). The helical transmembrane segment at 244-264 (WWIPVVGPMIGAVLGGLIYVL) threads the bilayer. At 265-295 (FIQMHHSNPDPEVKAEPAENNLEKHELSVIM) the chain is on the cytoplasmic side.

The protein belongs to the MIP/aquaporin (TC 1.A.8) family. As to quaternary structure, homotetramer; each monomer provides an independent glycerol/water pore.

The protein localises to the cell membrane. Its subcellular location is the basolateral cell membrane. It carries out the reaction glycerol(in) = glycerol(out). The catalysed reaction is H2O(in) = H2O(out). The enzyme catalyses urea(in) = urea(out). It catalyses the reaction (S)-lactate(in) = (S)-lactate(out). It carries out the reaction NH4(+)(in) = NH4(+)(out). The catalysed reaction is uracil(in) = uracil(out). The enzyme catalyses adenine(out) = adenine(in). It catalyses the reaction 3-hydroxybutanoate(in) = 3-hydroxybutanoate(out). It carries out the reaction D-sorbitol(in) = D-sorbitol(out). The catalysed reaction is D-mannitol(in) = D-mannitol(out). The enzyme catalyses H2O2(out) = H2O2(in). It catalyses the reaction arsenite(in) = arsenite(out). It carries out the reaction selenite(in) = selenite(out). Aquaglyceroporins form homotetrameric transmembrane channels, with each monomer independently mediating glycerol and water transport across the plasma membrane along their osmotic gradient. AQP9 is the primary route for glycerol uptake in hepatocytes, supporting hepatic gluconeogenesis. It exhibits broad specificity and may transport various small, non-charged solutes, including carbamides, polyols, purines, and pyrimidines. AQP9 may also facilitate hepatic urea extrusion. Due to its permeability to lactate, AQP9 might participate in the astrocyte-to-neuron lactate shuttle, supplying neurons with energy. Additionally, AQP9 is permeable to arsenite, contributing to arsenic excretion by the liver and providing partial protection against arsenic toxicity. It is also permeable to H2O2 in vivo. Could also be permeable to ammonium. The sequence is that of Aquaporin-9 from Mus musculus (Mouse).